We begin with the raw amino-acid sequence, 598 residues long: Nuclear receptor subfamily 4 group A member 2 (598 aa).

A disordered region spans residues 1–22 (MPCVQAQYGSSPQGASPASQSY). Over residues 8-22 (YGSSPQGASPASQSY) the composition is skewed to low complexity. A DNA-binding region (nuclear receptor) is located at residues 260 to 335 (EGLCAVCGDN…VGMVKEVVRT (76 aa)). 2 consecutive NR C4-type zinc fingers follow at residues 263 to 283 (CAVCGDNAACQHYGVRTCEGC) and 299 to 323 (CLANKNCPVDKRRRNRCQYCRFQKC). The short motif at 287–314 (FKRTVQKNAKYVCLANKNCPVDKRRRNR) is the Bipartite nuclear localization signal (NLS1) element. The disordered stretch occupies residues 337–361 (SLKGRRGRLPSKPKSPQEPSPPSPP). The Nuclear localization signal (NLS1) signature appears at 338–350 (LKGRRGRLPSKPK). The span at 352–361 (PQEPSPPSPP) shows a compositional bias: pro residues. Positions 360–595 (PPVSLISALV…AIIDKLFLDT (236 aa)) constitute an NR LBD domain. The short motif at 443-452 (FLELFVLRLA) is the nuclear export sequence (NES1) element. The nuclear export sequence (NES2) motif lies at 568–577 (QGLQRIFYLK).

It belongs to the nuclear hormone receptor family. NR4 subfamily. Interacts with SFPQ, NCOR2, SIN3A and HADC1. The interaction with NCOR2 increases in the absence of PITX3. Interacts with PER2. As to expression, expressed in a number of cell lines of T-cell, B-cell and fibroblast origin. Strong expression in brain tissue.

It is found in the cytoplasm. The protein localises to the nucleus. Functionally, transcriptional regulator which is important for the differentiation and maintenance of meso-diencephalic dopaminergic (mdDA) neurons during development. It is crucial for expression of a set of genes such as SLC6A3, SLC18A2, TH and DRD2 which are essential for development of mdDA neurons. The protein is Nuclear receptor subfamily 4 group A member 2 (NR4A2) of Homo sapiens (Human).